The sequence spans 339 residues: Annexin A2 (339 aa).

Ser2 bears the N-acetylserine mark. Residues Ser2 to Tyr24 are S100A10-binding site. Tyr24 is subject to Phosphotyrosine; by SRC. The residue at position 26 (Thr26) is a Phosphothreonine; by PKC. Annexin repeat units lie at residues Phe33–Lys104, Thr105–Lys176, Glu189–Gln261, and Asn265–Gly336.

Belongs to the annexin family. In terms of assembly, heterotetramer containing 2 light chains of S100A10/p11 and 2 heavy chains of ANXA2/p36.

The protein localises to the secreted. It is found in the extracellular space. It localises to the extracellular matrix. Its subcellular location is the basement membrane. Functionally, calcium-regulated membrane-binding protein whose affinity for calcium is greatly enhanced by anionic phospholipids. It binds two calcium ions with high affinity. The sequence is that of Annexin A2 (ANXA2) from Gallus gallus (Chicken).